Consider the following 401-residue polypeptide: Nicotinate phosphoribosyltransferase (401 aa).

Histidine 224 is subject to Phosphohistidine; by autocatalysis.

Belongs to the NAPRTase family. Transiently phosphorylated on a His residue during the reaction cycle. Phosphorylation strongly increases the affinity for substrates and increases the rate of nicotinate D-ribonucleotide production. Dephosphorylation regenerates the low-affinity form of the enzyme, leading to product release.

It carries out the reaction nicotinate + 5-phospho-alpha-D-ribose 1-diphosphate + ATP + H2O = nicotinate beta-D-ribonucleotide + ADP + phosphate + diphosphate. Its pathway is cofactor biosynthesis; NAD(+) biosynthesis; nicotinate D-ribonucleotide from nicotinate: step 1/1. Functionally, catalyzes the synthesis of beta-nicotinate D-ribonucleotide from nicotinate and 5-phospho-D-ribose 1-phosphate at the expense of ATP. The protein is Nicotinate phosphoribosyltransferase of Pseudomonas putida (strain ATCC 700007 / DSM 6899 / JCM 31910 / BCRC 17059 / LMG 24140 / F1).